A 248-amino-acid polypeptide reads, in one-letter code: Anamorsin homolog (248 aa).

An N-terminal SAM-like domain region spans residues 4–129 (FKGLQKSLYI…ETGSSARLSF (126 aa)). Positions 130–161 (AKKNANAANVWKISGDDEELIDEEELLDEEDK) are linker. Positions 172, 181, 184, and 186 each coordinate [2Fe-2S] cluster. The segment at 172–186 (CSTTGKRKACKNCSC) is fe-S binding site A. Positions 209, 212, 220, and 223 each coordinate [4Fe-4S] cluster. 2 short sequence motifs (cx2C motif) span residues 209 to 212 (CGNC) and 220 to 223 (CSTC). The tract at residues 209-223 (CGNCYLGDAFRCSTC) is fe-S binding site B.

The protein belongs to the anamorsin family. In terms of assembly, monomer. The cofactor is [2Fe-2S] cluster. [4Fe-4S] cluster is required as a cofactor.

It is found in the cytoplasm. Its subcellular location is the mitochondrion intermembrane space. Component of the cytosolic iron-sulfur (Fe-S) protein assembly (CIA) machinery. Required for the maturation of extramitochondrial Fe-S proteins. Part of an electron transfer chain functioning in an early step of cytosolic Fe-S biogenesis, facilitating the de novo assembly of a [4Fe-4S] cluster on the cytosolic Fe-S scaffold complex. Electrons are transferred from NADPH via a FAD- and FMN-containing diflavin oxidoreductase. Together with the diflavin oxidoreductase, also required for the assembly of the diferric tyrosyl radical cofactor of ribonucleotide reductase (RNR), probably by providing electrons for reduction during radical cofactor maturation in the catalytic small subunit. The protein is Anamorsin homolog of Drosophila sechellia (Fruit fly).